The following is a 111-amino-acid chain: Somatostatin-1B (111 aa).

Positions 1 to 19 are cleaved as a signal peptide; it reads MQLLSSLVSLLLVLYSVRA. The propeptide occupies 20–87; the sequence is AAVLPVEERN…RLEERAVYNR (68 aa). Cys-100 and Cys-111 are joined by a disulfide.

This sequence belongs to the somatostatin family.

It is found in the secreted. In terms of biological role, somatostatin inhibits the release of somatotropin. The protein is Somatostatin-1B (sst1b) of Carassius auratus (Goldfish).